Here is a 319-residue protein sequence, read N- to C-terminus: tRNA uridine(34) hydroxylase (319 aa).

The 95-residue stretch at 127–221 folds into the Rhodanese domain; that stretch reads KQEDTVIIDA…YGKDPEVQGE (95 aa). The active-site Cysteine persulfide intermediate is C181.

This sequence belongs to the TrhO family.

The enzyme catalyses uridine(34) in tRNA + AH2 + O2 = 5-hydroxyuridine(34) in tRNA + A + H2O. Its function is as follows. Catalyzes oxygen-dependent 5-hydroxyuridine (ho5U) modification at position 34 in tRNAs. The protein is tRNA uridine(34) hydroxylase of Bacillus cereus (strain ATCC 10987 / NRS 248).